A 116-amino-acid polypeptide reads, in one-letter code: Transcription elongation factor SPT4 homolog 2 (116 aa).

Residues 19–39 (CLRCRLVKTYDQFRDAGCENC) form a C4-type zinc finger.

It belongs to the SPT4 family.

It is found in the nucleus. Functionally, may regulate transcription elongation by RNA polymerase II. May enhance transcriptional pausing at sites proximal to the promoter, which may in turn facilitate the assembly of an elongation competent RNA polymerase II complex. The chain is Transcription elongation factor SPT4 homolog 2 from Arabidopsis thaliana (Mouse-ear cress).